Consider the following 340-residue polypeptide: GTPase Obg (340 aa).

The Obg domain maps to 1–159 (MRFIDKAKIH…RWIELELKLI (159 aa)). The OBG-type G domain maps to 160–331 (ADIGIIGFPN…LIKLIAEVYE (172 aa)). GTP contacts are provided by residues 166–173 (GFPNAGKS), 191–195 (FTTLT), 213–216 (DIPG), 283–286 (NKID), and 312–314 (SLV). Mg(2+) contacts are provided by Ser173 and Thr193.

It belongs to the TRAFAC class OBG-HflX-like GTPase superfamily. OBG GTPase family. Monomer. Requires Mg(2+) as cofactor.

Its subcellular location is the cytoplasm. An essential GTPase which binds GTP, GDP and possibly (p)ppGpp with moderate affinity, with high nucleotide exchange rates and a fairly low GTP hydrolysis rate. Plays a role in control of the cell cycle, stress response, ribosome biogenesis and in those bacteria that undergo differentiation, in morphogenesis control. The sequence is that of GTPase Obg from Persephonella marina (strain DSM 14350 / EX-H1).